Reading from the N-terminus, the 294-residue chain is Putative ribose uptake protein RbsU (294 aa).

10 consecutive transmembrane segments (helical) span residues 2 to 24 (NAVN…VIVG), 34 to 56 (ILGT…GTPI), 63 to 82 (IFCL…TFHV), 92 to 114 (MPIT…LGNW), 121 to 140 (LIGF…TAWS), 150 to 172 (GAVK…SAFP), 179 to 198 (GFQG…IIFG), 218 to 235 (IFSG…LISA), 242 to 264 (LATG…IYIL), and 274 to 293 (IAVM…TAFI).

This sequence belongs to the GRP transporter (TC 2.A.7.5) family.

Its subcellular location is the cell membrane. Its function is as follows. Could be involved in the uptake of ribose. This chain is Putative ribose uptake protein RbsU (rbsU), found in Latilactobacillus sakei subsp. sakei (strain 23K) (Lactobacillus sakei subsp. sakei).